The primary structure comprises 100 residues: Aspartyl/glutamyl-tRNA(Asn/Gln) amidotransferase subunit C (100 aa).

It belongs to the GatC family. Heterotrimer of A, B and C subunits.

It carries out the reaction L-glutamyl-tRNA(Gln) + L-glutamine + ATP + H2O = L-glutaminyl-tRNA(Gln) + L-glutamate + ADP + phosphate + H(+). The enzyme catalyses L-aspartyl-tRNA(Asn) + L-glutamine + ATP + H2O = L-asparaginyl-tRNA(Asn) + L-glutamate + ADP + phosphate + 2 H(+). Functionally, allows the formation of correctly charged Asn-tRNA(Asn) or Gln-tRNA(Gln) through the transamidation of misacylated Asp-tRNA(Asn) or Glu-tRNA(Gln) in organisms which lack either or both of asparaginyl-tRNA or glutaminyl-tRNA synthetases. The reaction takes place in the presence of glutamine and ATP through an activated phospho-Asp-tRNA(Asn) or phospho-Glu-tRNA(Gln). The chain is Aspartyl/glutamyl-tRNA(Asn/Gln) amidotransferase subunit C from Rickettsia felis (strain ATCC VR-1525 / URRWXCal2) (Rickettsia azadi).